Consider the following 385-residue polypeptide: Cyclin-A3-2 (385 aa).

Residues Met-1–Gly-110 form a disordered region. Composition is skewed to low complexity over residues Ser-7–Pro-41, Pro-74–Pro-88, and Pro-96–Gly-110.

The protein belongs to the cyclin family. Cyclin AB subfamily.

The protein is Cyclin-A3-2 (CYCA3-2) of Oryza sativa subsp. japonica (Rice).